The primary structure comprises 372 residues: NAD(P)H-quinone oxidoreductase subunit 1 (372 aa).

The next 8 helical transmembrane spans lie at Ile27 to Val47, Ile97 to Val117, Val128 to Met148, Leu176 to Val196, Ile204 to Leu224, Ile266 to Val286, Ser308 to Leu328, and Phe347 to Pro367.

It belongs to the complex I subunit 1 family. NDH-1 is composed of at least 11 different subunits.

The protein localises to the cellular thylakoid membrane. It carries out the reaction a plastoquinone + NADH + (n+1) H(+)(in) = a plastoquinol + NAD(+) + n H(+)(out). The enzyme catalyses a plastoquinone + NADPH + (n+1) H(+)(in) = a plastoquinol + NADP(+) + n H(+)(out). In terms of biological role, NDH-1 shuttles electrons from an unknown electron donor, via FMN and iron-sulfur (Fe-S) centers, to quinones in the respiratory and/or the photosynthetic chain. The immediate electron acceptor for the enzyme in this species is believed to be plastoquinone. Couples the redox reaction to proton translocation, and thus conserves the redox energy in a proton gradient. This is NAD(P)H-quinone oxidoreductase subunit 1 from Prochlorococcus marinus (strain MIT 9215).